A 149-amino-acid chain; its full sequence is SsrA-binding protein (149 aa).

The tract at residues 121 to 149 (GKKQHDKRAAEKDREWQREKQRLVRSAQH) is disordered. The span at 127–142 (KRAAEKDREWQREKQR) shows a compositional bias: basic and acidic residues.

This sequence belongs to the SmpB family.

The protein localises to the cytoplasm. Functionally, required for rescue of stalled ribosomes mediated by trans-translation. Binds to transfer-messenger RNA (tmRNA), required for stable association of tmRNA with ribosomes. tmRNA and SmpB together mimic tRNA shape, replacing the anticodon stem-loop with SmpB. tmRNA is encoded by the ssrA gene; the 2 termini fold to resemble tRNA(Ala) and it encodes a 'tag peptide', a short internal open reading frame. During trans-translation Ala-aminoacylated tmRNA acts like a tRNA, entering the A-site of stalled ribosomes, displacing the stalled mRNA. The ribosome then switches to translate the ORF on the tmRNA; the nascent peptide is terminated with the 'tag peptide' encoded by the tmRNA and targeted for degradation. The ribosome is freed to recommence translation, which seems to be the essential function of trans-translation. The protein is SsrA-binding protein of Thiobacillus denitrificans (strain ATCC 25259 / T1).